The primary structure comprises 371 residues: Phosphate acyltransferase (371 aa).

Belongs to the PlsX family. As to quaternary structure, homodimer. Probably interacts with PlsY.

The protein resides in the cytoplasm. It catalyses the reaction a fatty acyl-[ACP] + phosphate = an acyl phosphate + holo-[ACP]. The protein operates within lipid metabolism; phospholipid metabolism. Catalyzes the reversible formation of acyl-phosphate (acyl-PO(4)) from acyl-[acyl-carrier-protein] (acyl-ACP). This enzyme utilizes acyl-ACP as fatty acyl donor, but not acyl-CoA. The polypeptide is Phosphate acyltransferase (Ruegeria pomeroyi (strain ATCC 700808 / DSM 15171 / DSS-3) (Silicibacter pomeroyi)).